A 336-amino-acid polypeptide reads, in one-letter code: MSTPVKAAVFGTGSWGTAFGMVLADAGCDVTLWARRAELADAVNSTRTNPDYLPGVELPENLRATTDPAEAARAADFTVLAVPSQTLRGNLAEWVPLLAPDTVLVSLMKGVELGSAMRMSEVVEDVAKVGADRIAVVTGPNLAREIAARMPAAAVVACANEAVAQRLQAACHTPYFRPYTNTDVVGCELGGAVKNVIGLAVGIADGMGLGDNAKGSLITRGLAETTRLGLVMGADPLTFSGLAGLGDLVATCSSPLSRNHTFGTNLGRGMTLQETIAVTKQTAEGVKSCESVLDLARRHGVDMPITETVVGIVHEGKPPVVALKELMSRSAKPERR.

Residues Ser14, Trp15, Arg35, Arg36, and Lys109 each contribute to the NADPH site. 2 residues coordinate sn-glycerol 3-phosphate: Lys109 and Gly139. An NADPH-binding site is contributed by Ala143. Sn-glycerol 3-phosphate contacts are provided by Lys194, Asp247, Ser257, Arg258, and Asn259. Lys194 acts as the Proton acceptor in catalysis. Residue Arg258 coordinates NADPH. Residue Glu284 participates in NADPH binding.

It belongs to the NAD-dependent glycerol-3-phosphate dehydrogenase family.

The protein resides in the cytoplasm. It carries out the reaction sn-glycerol 3-phosphate + NAD(+) = dihydroxyacetone phosphate + NADH + H(+). It catalyses the reaction sn-glycerol 3-phosphate + NADP(+) = dihydroxyacetone phosphate + NADPH + H(+). The protein operates within membrane lipid metabolism; glycerophospholipid metabolism. Catalyzes the reduction of the glycolytic intermediate dihydroxyacetone phosphate (DHAP) to sn-glycerol 3-phosphate (G3P), the key precursor for phospholipid synthesis. The polypeptide is Glycerol-3-phosphate dehydrogenase [NAD(P)+] (Streptomyces avermitilis (strain ATCC 31267 / DSM 46492 / JCM 5070 / NBRC 14893 / NCIMB 12804 / NRRL 8165 / MA-4680)).